Consider the following 399-residue polypeptide: Phosphoglycerate kinase (399 aa).

Substrate contacts are provided by residues Asp21–Asn23, Arg36, His59–Arg62, Arg120, and Arg158. ATP-binding positions include Lys209, Gly297, Glu328, and Gly355–Ser358.

The protein belongs to the phosphoglycerate kinase family. Monomer.

Its subcellular location is the cytoplasm. It carries out the reaction (2R)-3-phosphoglycerate + ATP = (2R)-3-phospho-glyceroyl phosphate + ADP. Its pathway is carbohydrate degradation; glycolysis; pyruvate from D-glyceraldehyde 3-phosphate: step 2/5. The sequence is that of Phosphoglycerate kinase from Streptococcus thermophilus (strain CNRZ 1066).